Reading from the N-terminus, the 204-residue chain is Holliday junction branch migration complex subunit RuvA (204 aa).

The segment at 1-64 is domain I; sequence MIGRLRGTLI…EDAQLLYGFN (64 aa). The interval 65–143 is domain II; it reads TVSERALFRE…GWGAGDLFTP (79 aa). The tract at residues 144–155 is flexible linker; sequence ATDAAPVDSTPV. The segment at 156–204 is domain III; the sequence is IAQNAQEEAMSALLALGYKPPQASKAVSQVAKAGMSSEELIREALKSMV.

Belongs to the RuvA family. In terms of assembly, homotetramer. Forms an RuvA(8)-RuvB(12)-Holliday junction (HJ) complex. HJ DNA is sandwiched between 2 RuvA tetramers; dsDNA enters through RuvA and exits via RuvB. An RuvB hexamer assembles on each DNA strand where it exits the tetramer. Each RuvB hexamer is contacted by two RuvA subunits (via domain III) on 2 adjacent RuvB subunits; this complex drives branch migration. In the full resolvosome a probable DNA-RuvA(4)-RuvB(12)-RuvC(2) complex forms which resolves the HJ.

It is found in the cytoplasm. Its function is as follows. The RuvA-RuvB-RuvC complex processes Holliday junction (HJ) DNA during genetic recombination and DNA repair, while the RuvA-RuvB complex plays an important role in the rescue of blocked DNA replication forks via replication fork reversal (RFR). RuvA specifically binds to HJ cruciform DNA, conferring on it an open structure. The RuvB hexamer acts as an ATP-dependent pump, pulling dsDNA into and through the RuvAB complex. HJ branch migration allows RuvC to scan DNA until it finds its consensus sequence, where it cleaves and resolves the cruciform DNA. The polypeptide is Holliday junction branch migration complex subunit RuvA (Vibrio cholerae serotype O1 (strain ATCC 39541 / Classical Ogawa 395 / O395)).